The following is a 305-amino-acid chain: UDP-3-O-acyl-N-acetylglucosamine deacetylase (305 aa).

Residues His-77, His-234, and Asp-238 each contribute to the Zn(2+) site. His-261 (proton donor) is an active-site residue.

It belongs to the LpxC family. It depends on Zn(2+) as a cofactor.

The catalysed reaction is a UDP-3-O-[(3R)-3-hydroxyacyl]-N-acetyl-alpha-D-glucosamine + H2O = a UDP-3-O-[(3R)-3-hydroxyacyl]-alpha-D-glucosamine + acetate. The protein operates within glycolipid biosynthesis; lipid IV(A) biosynthesis; lipid IV(A) from (3R)-3-hydroxytetradecanoyl-[acyl-carrier-protein] and UDP-N-acetyl-alpha-D-glucosamine: step 2/6. Catalyzes the hydrolysis of UDP-3-O-myristoyl-N-acetylglucosamine to form UDP-3-O-myristoylglucosamine and acetate, the committed step in lipid A biosynthesis. In Oleidesulfovibrio alaskensis (strain ATCC BAA-1058 / DSM 17464 / G20) (Desulfovibrio alaskensis), this protein is UDP-3-O-acyl-N-acetylglucosamine deacetylase.